Reading from the N-terminus, the 145-residue chain is uncharacterized protein (145 aa).

This is an uncharacterized protein from Escherichia coli (strain K12).